Consider the following 129-residue polypeptide: Small ribosomal subunit protein uS11 (129 aa).

Belongs to the universal ribosomal protein uS11 family. In terms of assembly, part of the 30S ribosomal subunit. Interacts with proteins S7 and S18. Binds to IF-3.

In terms of biological role, located on the platform of the 30S subunit, it bridges several disparate RNA helices of the 16S rRNA. Forms part of the Shine-Dalgarno cleft in the 70S ribosome. This chain is Small ribosomal subunit protein uS11, found in Francisella tularensis subsp. mediasiatica (strain FSC147).